The following is a 557-amino-acid chain: Dihydroxy-acid dehydratase (557 aa).

Residue Cys50 coordinates [2Fe-2S] cluster. Asp82 lines the Mg(2+) pocket. Cys123 is a [2Fe-2S] cluster binding site. Asp124 and Lys125 together coordinate Mg(2+). Lys125 bears the N6-carboxylysine mark. Cys195 contributes to the [2Fe-2S] cluster binding site. Mg(2+) is bound at residue Glu447. Ser473 (proton acceptor) is an active-site residue.

The protein belongs to the IlvD/Edd family. In terms of assembly, homodimer. [2Fe-2S] cluster is required as a cofactor. Mg(2+) serves as cofactor.

It catalyses the reaction (2R)-2,3-dihydroxy-3-methylbutanoate = 3-methyl-2-oxobutanoate + H2O. The enzyme catalyses (2R,3R)-2,3-dihydroxy-3-methylpentanoate = (S)-3-methyl-2-oxopentanoate + H2O. It participates in amino-acid biosynthesis; L-isoleucine biosynthesis; L-isoleucine from 2-oxobutanoate: step 3/4. The protein operates within amino-acid biosynthesis; L-valine biosynthesis; L-valine from pyruvate: step 3/4. Functionally, functions in the biosynthesis of branched-chain amino acids. Catalyzes the dehydration of (2R,3R)-2,3-dihydroxy-3-methylpentanoate (2,3-dihydroxy-3-methylvalerate) into 2-oxo-3-methylpentanoate (2-oxo-3-methylvalerate) and of (2R)-2,3-dihydroxy-3-methylbutanoate (2,3-dihydroxyisovalerate) into 2-oxo-3-methylbutanoate (2-oxoisovalerate), the penultimate precursor to L-isoleucine and L-valine, respectively. The chain is Dihydroxy-acid dehydratase from Ralstonia nicotianae (strain ATCC BAA-1114 / GMI1000) (Ralstonia solanacearum).